The primary structure comprises 365 residues: MTDQAQQKRILIMAGGTGGHVFPALAVAKYLSQQGWKVRWLGTADRMEARLVPQHGFDIDFLDIKGVRGNGLLRKLAAPFKILRSVMQARSVIQDFKPDVVMGMGGFASGPGGVAARLSGIPLVLHEQNAIPGMTNKLLSKVATEVLCAFPDTFTDVRAETVGNPIRKELIALGGNRDKACEEEALKVLVVGGSLGAKIFNDVMPGALEGVSKTHPMTVWHQVGRNNLASVKAEYQHLGQDGSVKVAEFIDDMEAAYRWADVVVCRSGALTVSELAAVGLPSLLVPYPHAVDDHQTKNAQVLVEAGAAFLLPQPLVDSSKLISKLSMLASDRKELCKMGERARDVAVLDATQRVAYACIKLAEKG.

UDP-N-acetyl-alpha-D-glucosamine contacts are provided by residues 17-19, N129, R167, S194, I250, 269-274, and Q295; these read TGG and ALTVSE.

This sequence belongs to the glycosyltransferase 28 family. MurG subfamily.

The protein resides in the cell inner membrane. It catalyses the reaction di-trans,octa-cis-undecaprenyl diphospho-N-acetyl-alpha-D-muramoyl-L-alanyl-D-glutamyl-meso-2,6-diaminopimeloyl-D-alanyl-D-alanine + UDP-N-acetyl-alpha-D-glucosamine = di-trans,octa-cis-undecaprenyl diphospho-[N-acetyl-alpha-D-glucosaminyl-(1-&gt;4)]-N-acetyl-alpha-D-muramoyl-L-alanyl-D-glutamyl-meso-2,6-diaminopimeloyl-D-alanyl-D-alanine + UDP + H(+). It functions in the pathway cell wall biogenesis; peptidoglycan biosynthesis. Cell wall formation. Catalyzes the transfer of a GlcNAc subunit on undecaprenyl-pyrophosphoryl-MurNAc-pentapeptide (lipid intermediate I) to form undecaprenyl-pyrophosphoryl-MurNAc-(pentapeptide)GlcNAc (lipid intermediate II). This chain is UDP-N-acetylglucosamine--N-acetylmuramyl-(pentapeptide) pyrophosphoryl-undecaprenol N-acetylglucosamine transferase, found in Shewanella piezotolerans (strain WP3 / JCM 13877).